The following is a 67-amino-acid chain: Conotoxin reg3.8 (67 aa).

Residues 1–22 form the signal peptide; sequence MMSKLGVLLTICLLLFPLSVLP. The propeptide occupies 23–50; sequence LDGDQLADQPARHAQSAERNARFHPVKR. 3 disulfides stabilise this stretch: cysteine 51–cysteine 65, cysteine 52–cysteine 63, and cysteine 57–cysteine 66. A Cysteine amide modification is found at cysteine 66.

Belongs to the conotoxin M superfamily. As to expression, expressed by the venom duct.

The protein localises to the secreted. This Conus regius (Crown cone) protein is Conotoxin reg3.8.